Here is a 501-residue protein sequence, read N- to C-terminus: Vitamin D 25-hydroxylase (501 aa).

Ala250 serves as a coordination point for substrate. Cys448 is a binding site for heme.

This sequence belongs to the cytochrome P450 family. In terms of assembly, homodimer. Heme serves as cofactor. In terms of tissue distribution, highly expressed in the liver and testis.

It is found in the endoplasmic reticulum membrane. It localises to the microsome membrane. The catalysed reaction is calciol + reduced [NADPH--hemoprotein reductase] + O2 = calcidiol + oxidized [NADPH--hemoprotein reductase] + H2O + H(+). It carries out the reaction vitamin D2 + reduced [NADPH--hemoprotein reductase] + O2 = 25-hydroxyvitamin D2 + oxidized [NADPH--hemoprotein reductase] + H2O + H(+). It catalyses the reaction 1alpha-hydroxyvitamin D2 + reduced [NADPH--hemoprotein reductase] + O2 = 1alpha,25-dihydroxyvitamin D2 + oxidized [NADPH--hemoprotein reductase] + H2O + H(+). The enzyme catalyses alfacalcidol + reduced [NADPH--hemoprotein reductase] + O2 = calcitriol + oxidized [NADPH--hemoprotein reductase] + H2O + H(+). Its pathway is hormone biosynthesis; vitamin D biosynthesis. In terms of biological role, a cytochrome P450 monooxygenase involved in activation of vitamin D precursors. Catalyzes hydroxylation at C-25 of both forms of vitamin D, vitamin D(2) and D(3) (calciol). Can metabolize vitamin D analogs/prodrugs 1alpha-hydroxyvitamin D(2) (doxercalciferol) and 1alpha-hydroxyvitamin D(3) (alfacalcidol) forming 25-hydroxy derivatives. Mechanistically, uses molecular oxygen inserting one oxygen atom into a substrate, and reducing the second into a water molecule, with two electrons provided by NADPH via cytochrome P450 reductase (CPR; NADPH-ferrihemoprotein reductase). This is Vitamin D 25-hydroxylase (Cyp2r1) from Mus musculus (Mouse).